The following is a 175-amino-acid chain: Small ribosomal subunit protein uS7 (175 aa).

Belongs to the universal ribosomal protein uS7 family. Part of the 30S ribosomal subunit. Contacts proteins S9 and S11.

In terms of biological role, one of the primary rRNA binding proteins, it binds directly to 16S rRNA where it nucleates assembly of the head domain of the 30S subunit. Is located at the subunit interface close to the decoding center, probably blocks exit of the E-site tRNA. This is Small ribosomal subunit protein uS7 from Neorickettsia sennetsu (strain ATCC VR-367 / Miyayama) (Ehrlichia sennetsu).